Reading from the N-terminus, the 51-residue chain is MKKIIICVILLAIMLLAACQVNNVRDTGGGSVSPSSIVTGVSMGSDGVGNP.

A signal peptide spans 1–18 (MKKIIICVILLAIMLLAA). Cys19 is lipidated: N-palmitoyl cysteine. Cys19 is lipidated: S-diacylglycerol cysteine. The interval 27–51 (TGGGSVSPSSIVTGVSMGSDGVGNP) is disordered.

The protein localises to the cell outer membrane. Functionally, lysis proteins are required for both colicin release and partial cell lysis. This Citrobacter freundii protein is Lysis protein for colicin A (cal).